The following is a 778-amino-acid chain: MSSGSKEGGGGSPAYHLPHPHPHPPQHAQYVGPYRLEKTLGKGQTGLVKLGVHCITGQKVAVKIVNREKLSESVLMKVEREIAILKLIEHPHVLKLHDVYENKKYLYLVLEHVSGGELFDYLVKKGRLTPKEARKFFRQIVSALDFCHSYSICHRDLKPENLLLDEKNNIRIADFGMASLQVGDSLLETSCGSPHYACPEVIKGEKYDGRRADMWSCGVILFALLVGALPFDDDNLRQLLEKVKRGVFHMPHFIPPDCQSLLRGMIEVEPEKRLSLEQIQKHPWYLGGKHEPDPCLEPAPGRRVAMRSLPSNGELDPDVLESMASLGCFRDRERLHRELRSEEENQEKMIYYLLLDRKERYPSCEDQDLPPRNDVDPPRKRVDSPMLSRHGKRRPERKSMEVLSITDAGSGGSPVPTRRALEMAQHSQRSRSVSGASTGLSSSPLSSPRSPVFSFSPEPGAGDEARGGGSPTSKTQTLPSRGPRGGGAGEQPPPPSARSTPLPGPPGSPRSSGGTPLHSPLHTPRASPTGTPGTTPPPSPGGGVGGAAWRSRLNSIRNSFLGSPRFHRRKMQVPTAEEMSSLTPESSPELAKRSWFGNFISLDKEEQIFLVLKDKPLSSIKADIVHAFLSIPSLSHSVLSQTSFRAEYKASGGPSVFQKPVRFQVDISSSEGPEPSPRRDGSSGGGIYSVTFTLISGPSRRFKRVVETIQAQLLSTHDQPSVQALADEKNGAQTRPAGTPPRSLQPPPGRSDPDLSSSPRRGPPKDKKLLATNGTPLP.

Gly residues predominate over residues 1–12 (MSSGSKEGGGGS). A disordered region spans residues 1-29 (MSSGSKEGGGGSPAYHLPHPHPHPPQHAQ). In terms of domain architecture, Protein kinase spans 34 to 285 (YRLEKTLGKG…LEQIQKHPWY (252 aa)). ATP contacts are provided by residues 40 to 48 (LGKGQTGLV) and Lys-63. The Proton acceptor role is filled by Asp-156. Residue Thr-189 is modified to Phosphothreonine; by LKB1. The region spanning 314–356 (ELDPDVLESMASLGCFRDRERLHRELRSEEENQEKMIYYLLLD) is the UBA domain. A compositionally biased stretch (basic and acidic residues) spans 362–383 (PSCEDQDLPPRNDVDPPRKRVD). Residues 362 to 548 (PSCEDQDLPP…SPGGGVGGAA (187 aa)) are disordered. Phosphoserine is present on residues Ser-399, Ser-443, Ser-447, and Ser-450. Residues 430-457 (SRSVSGASTGLSSSPLSSPRSPVFSFSP) show a composition bias toward low complexity. Omega-N-methylarginine occurs at positions 466, 481, 484, and 498. Positions 491-508 (QPPPPSARSTPLPGPPGS) are enriched in pro residues. Phosphoserine is present on Ser-508. The segment covering 509–533 (PRSSGGTPLHSPLHTPRASPTGTPG) has biased composition (low complexity). Arg-525 carries the post-translational modification Omega-N-methylarginine. A phosphothreonine mark is found at Thr-529 and Thr-535. The residue at position 550 (Arg-550) is an Omega-N-methylarginine. The disordered stretch occupies residues 560 to 588 (FLGSPRFHRRKMQVPTAEEMSSLTPESSP). Thr-583 is subject to Phosphothreonine. Phosphoserine is present on residues Ser-586, Ser-587, and Ser-601. Residues 719 to 778 (QPSVQALADEKNGAQTRPAGTPPRSLQPPPGRSDPDLSSSPRRGPPKDKKLLATNGTPLP) are disordered.

It belongs to the protein kinase superfamily. CAMK Ser/Thr protein kinase family. SNF1 subfamily. Mg(2+) is required as a cofactor. Post-translationally, phosphorylated at Thr-189 by STK11/LKB1 in complex with STE20-related adapter-alpha (STRADA) pseudo kinase and CAB39. Not phosphorylated at Thr-189 by CaMKK2. In contrast, it is phosphorylated and activated by CaMKK1. May be inactivated via dephosphorylation of Thr-189 by PP2C. In terms of tissue distribution, present in the gray matter of the brain and spinal cord (at protein level). Expressed in the nervous system, distributed within the brain and spinal cord of embryonic and postnatal animals.

Its subcellular location is the cytoplasm. It localises to the nucleus. It is found in the cytoskeleton. The protein resides in the microtubule organizing center. The protein localises to the centrosome. Its subcellular location is the synapse. It localises to the presynaptic active zone. It is found in the cytoplasmic vesicle. The protein resides in the secretory vesicle. The protein localises to the synaptic vesicle. The enzyme catalyses L-seryl-[protein] + ATP = O-phospho-L-seryl-[protein] + ADP + H(+). It catalyses the reaction L-threonyl-[protein] + ATP = O-phospho-L-threonyl-[protein] + ADP + H(+). It carries out the reaction L-seryl-[tau protein] + ATP = O-phospho-L-seryl-[tau protein] + ADP + H(+). The catalysed reaction is L-threonyl-[tau protein] + ATP = O-phospho-L-threonyl-[tau protein] + ADP + H(+). Activated by phosphorylation on Thr-189 by STK11/LKB1. Serine/threonine-protein kinase that plays a key role in polarization of neurons and centrosome duplication. Phosphorylates CDC25B, CDC25C, MAPT/TAU, RIMS1, TUBG1, TUBG2 and WEE1. Following phosphorylation and activation by STK11/LKB1, acts as a key regulator of polarization of cortical neurons, probably by mediating phosphorylation of microtubule-associated proteins such as MAPT/TAU at 'Thr-504' and 'Ser-554'. Also regulates neuron polarization by mediating phosphorylation of WEE1 at 'Ser-642' in postmitotic neurons, leading to down-regulate WEE1 activity in polarized neurons. In neurons, localizes to synaptic vesicles and plays a role in neurotransmitter release, possibly by phosphorylating RIMS1. Also acts as a positive regulator of centrosome duplication by mediating phosphorylation of gamma-tubulin (TUBG1 and TUBG2) at 'Ser-131', leading to translocation of gamma-tubulin and its associated proteins to the centrosome. Involved in the UV-induced DNA damage checkpoint response, probably by inhibiting CDK1 activity through phosphorylation and activation of WEE1, and inhibition of CDC25B and CDC25C. The chain is Serine/threonine-protein kinase BRSK1 (Brsk1) from Mus musculus (Mouse).